A 308-amino-acid chain; its full sequence is Aspartate carbamoyltransferase catalytic subunit (308 aa).

The carbamoyl phosphate site is built by Arg59 and Thr60. Lys87 is an L-aspartate binding site. Carbamoyl phosphate is bound by residues Arg109, His137, and Gln140. The L-aspartate site is built by Arg173 and Arg224. Carbamoyl phosphate-binding residues include Gly267 and Pro268.

This sequence belongs to the aspartate/ornithine carbamoyltransferase superfamily. ATCase family. Heterododecamer (2C3:3R2) of six catalytic PyrB chains organized as two trimers (C3), and six regulatory PyrI chains organized as three dimers (R2).

The catalysed reaction is carbamoyl phosphate + L-aspartate = N-carbamoyl-L-aspartate + phosphate + H(+). It participates in pyrimidine metabolism; UMP biosynthesis via de novo pathway; (S)-dihydroorotate from bicarbonate: step 2/3. Functionally, catalyzes the condensation of carbamoyl phosphate and aspartate to form carbamoyl aspartate and inorganic phosphate, the committed step in the de novo pyrimidine nucleotide biosynthesis pathway. In Helicobacter acinonychis (strain Sheeba), this protein is Aspartate carbamoyltransferase catalytic subunit.